Reading from the N-terminus, the 109-residue chain is UPF0060 membrane protein HEAR0108 (109 aa).

4 helical membrane passes run 7 to 27 (VALF…PYLW), 33 to 53 (SIWL…LLSL), 63 to 83 (AAYG…VDGI), and 87 to 107 (NWDV…MFAP).

It belongs to the UPF0060 family.

The protein localises to the cell inner membrane. The polypeptide is UPF0060 membrane protein HEAR0108 (Herminiimonas arsenicoxydans).